The chain runs to 172 residues: uncharacterized protein (172 aa).

Positions 147-159 are enriched in gly residues; sequence AGSGSGSGSGSGS. The disordered stretch occupies residues 147-172; that stretch reads AGSGSGSGSGSGSDTGPFKKSQYKIL.

This is an uncharacterized protein from Homo sapiens (Human).